Consider the following 143-residue polypeptide: Small ribosomal subunit protein uS9 (143 aa).

Positions 123–143 are disordered; it reads RPEPKKFGGRGARSRFQKSYR. Over residues 134–143 the composition is skewed to basic residues; that stretch reads ARSRFQKSYR.

This sequence belongs to the universal ribosomal protein uS9 family.

In Kluyveromyces lactis (strain ATCC 8585 / CBS 2359 / DSM 70799 / NBRC 1267 / NRRL Y-1140 / WM37) (Yeast), this protein is Small ribosomal subunit protein uS9 (RPS16).